The primary structure comprises 148 residues: Transcriptional repressor NrdR (148 aa).

Positions 1-22 are disordered; it reads MKCPYCSAPDSKVVNSRPSDDG. A zinc finger lies at 3 to 34; that stretch reads CPYCSAPDSKVVNSRPSDDGASIRRRRECLNC. One can recognise an ATP-cone domain in the interval 49-136; the sequence is LMVVKRSGPR…VYRDFDSLER (88 aa).

The protein belongs to the NrdR family. Zn(2+) serves as cofactor.

In terms of biological role, negatively regulates transcription of bacterial ribonucleotide reductase nrd genes and operons by binding to NrdR-boxes. The sequence is that of Transcriptional repressor NrdR from Deinococcus deserti (strain DSM 17065 / CIP 109153 / LMG 22923 / VCD115).